A 246-amino-acid polypeptide reads, in one-letter code: Osmotin-like protein TPM-1 (246 aa).

Positions 1-21 (MAYLRSSFVFFLLAFVTYTYA) are cleaved as a signal peptide. 8 disulfide bridges follow: C30/C225, C72/C82, C87/C93, C141/C213, C146/C196, C154/C164, C168/C177, and C178/C183.

The protein belongs to the thaumatin family.

It localises to the vacuole. It carries out the reaction Endohydrolysis of (1-&gt;3)- or (1-&gt;4)-linkages in beta-D-glucans when the glucose residue whose reducing group is involved in the linkage to be hydrolyzed is itself substituted at C-3.. Antifungal protein that inhibits the growth of several phytopathogenic fungi (e.g. Trichothecium roseum, Fusarium oxysporum, Phytophthora citrophthora and Colletotrichum coccodes). May bind to beta-glucans and have beta-1,3-D-glucanase activity. The chain is Osmotin-like protein TPM-1 from Solanum lycopersicum (Tomato).